The sequence spans 170 residues: Envelope protein 166 (170 aa).

A topological domain (intravirion) is located at residue M1. The helical transmembrane segment at 2 to 22 (FYPVVQVLIGIILVIILILGF) threads the bilayer. At 23 to 170 (YHMKHKPPKK…TVMGIARNVL (148 aa)) the chain is on the virion surface side.

The protein belongs to the asfivirus envelope protein p22 family.

It is found in the virion membrane. The protein resides in the host cell membrane. The polypeptide is Envelope protein 166 (Ornithodoros (relapsing fever ticks)).